The chain runs to 213 residues: Adenylate kinase (213 aa).

10 to 15 (GAGKGT) contributes to the ATP binding site. The segment at 30–59 (AVGDIFRTIIKTSTSEAELINNYVKQGALI) is NMP. AMP-binding positions include Arg36, 57–59 (ALI), 85–88 (GYPR), and Gln92. The LID stretch occupies residues 123 to 161 (GRYSCKNCGKIYNVHFLQPKTDYVCDVCSSNVFDYRRDD). Residue Arg124 coordinates ATP. Positions 127 and 130 each coordinate Zn(2+). 133 to 134 (IY) is a binding site for ATP. Cys147 and Cys150 together coordinate Zn(2+). Arg158 and Arg169 together coordinate AMP. Lys197 contacts ATP.

Belongs to the adenylate kinase family. As to quaternary structure, monomer.

It localises to the cytoplasm. The catalysed reaction is AMP + ATP = 2 ADP. It functions in the pathway purine metabolism; AMP biosynthesis via salvage pathway; AMP from ADP: step 1/1. Its function is as follows. Catalyzes the reversible transfer of the terminal phosphate group between ATP and AMP. Plays an important role in cellular energy homeostasis and in adenine nucleotide metabolism. This Rickettsia typhi (strain ATCC VR-144 / Wilmington) protein is Adenylate kinase.